Reading from the N-terminus, the 350-residue chain is Integrin beta-1-binding protein 2 (350 aa).

Residues C5, C10, C24, and H27 each contribute to the Zn(2+) site. One can recognise a CHORD 1 domain in the interval 5 to 64; the sequence is CYNKGCGQHFDPNTNLPDSCRYHPGVPIFHDALKGWSCCRKRTVDFSEFLNIKGCTVGLH. Positions 28–31 match the SH3-binding motif; it reads PGVP. Zn(2+) contacts are provided by C42, C43, C59, and H64. The SH3-binding motif lies at 70 to 79; that stretch reads PEVPPQPEGP. The tract at residues 72-92 is disordered; the sequence is VPPQPEGPATSSLQEQKPLNT. The segment covering 80–92 has biased composition (polar residues); it reads ATSSLQEQKPLNT. Positions 150 and 155 each coordinate Zn(2+). One can recognise a CHORD 2 domain in the interval 150 to 209; that stretch reads CQNPGCDAVYQGPESDATPCTYHPGAPRFHEGMKSWSCCGIQTLDFGAFLAQPGCRVGRH. The SH2-binding motif lies at 159–162; the sequence is YQGP. Zn(2+) is bound by residues C169 and H172. The SH3-binding motif lies at 173 to 176; sequence PGAP. C187, C188, C204, and H209 together coordinate Zn(2+). The 90-residue stretch at 216–305 folds into the CS domain; sequence PASCRHDWHQ…ADPGSWAQLE (90 aa). Positions 235 to 238 match the SH2-binding motif; that stretch reads YGQI. Positions 317–350 are disordered; the sequence is GVLLEMDEEESEDSDDDLSWTEEEDEEEEEAMGE. The span at 321–350 shows a compositional bias: acidic residues; the sequence is EMDEEESEDSDDDLSWTEEEDEEEEEAMGE.

As to quaternary structure, interacts with beta-1 integrin subunit. This interaction is regulated by divalent cations, and it occurs only in absence of calcium. Expressed in skeletal and cardiac muscles but not in other tissues. Is localized in rows flanking the Z line containing alpha-actinin.

May play a role during maturation and/or organization of muscles cells. In Mus musculus (Mouse), this protein is Integrin beta-1-binding protein 2 (Itgb1bp2).